The following is a 359-amino-acid chain: Guanine nucleotide-binding protein subunit alpha-11 (359 aa).

S-palmitoyl cysteine attachment occurs at residues Cys9 and Cys10. Residues 38-359 (RELKLLLLGT…QLNLKEYNLV (322 aa)) enclose the G-alpha domain. A G1 motif region spans residues 41–54 (KLLLLGTGESGKST). Residues 46 to 53 (GTGESGKS) and 180 to 183 (LRVR) contribute to the GTP site. Ser53 is a binding site for Mg(2+). The G2 motif stretch occupies residues 178–186 (DVLRVRVPT). Residue Thr186 coordinates Mg(2+). Residues 201 to 210 (FRMVDVGGQR) form a G3 motif region. Residues 270 to 277 (ILFLNKKD) form a G4 motif region. GTP contacts are provided by residues 274 to 277 (NKKD) and Ala331. Positions 329–334 (TCATDT) are G5 motif.

This sequence belongs to the G-alpha family. G(q) subfamily. As to quaternary structure, g proteins are composed of 3 units; alpha, beta and gamma. The alpha chain contains the guanine nucleotide binding site. Interacts with RGS22. Interacts with NTSR1.

The protein localises to the cell membrane. It is found in the cytoplasm. The enzyme catalyses GTP + H2O = GDP + phosphate + H(+). Guanine nucleotide-binding proteins (G proteins) function as transducers downstream of G protein-coupled receptors (GPCRs) in numerous signaling cascades. The alpha chain contains the guanine nucleotide binding site and alternates between an active, GTP-bound state and an inactive, GDP-bound state. Signaling by an activated GPCR promotes GDP release and GTP binding. The alpha subunit has a low GTPase activity that converts bound GTP to GDP, thereby terminating the signal. Both GDP release and GTP hydrolysis are modulated by numerous regulatory proteins. Signaling is mediated via phospholipase C-beta-dependent inositol lipid hydrolysis for signal propagation: activates phospholipase C-beta: following GPCR activation, GNA11 activates PLC-beta (PLCB1, PLCB2, PLCB3 or PLCB4), leading to production of diacylglycerol (DAG) and inositol 1,4,5-trisphosphate (IP3). Transduces FFAR4 signaling in response to long-chain fatty acids (LCFAs). Together with GNAQ, required for heart development. In the respiratory epithelium, transmits OXGR1-dependent signals that lead to downstream intracellular Ca(2+) release and mucocilliary clearance of airborne pathogens. The sequence is that of Guanine nucleotide-binding protein subunit alpha-11 (GNA11) from Sus scrofa (Pig).